The following is a 1204-amino-acid chain: TPR repeat-containing protein DDB_G0287999 (1204 aa).

The segment covering 32-48 (TTDTTTTTSTSTTTDTD) has biased composition (low complexity). Residues 32 to 55 (TTDTTTTTSTSTTTDTDTNSEKSN) are disordered. 3 TPR repeats span residues 263–296 (SKGL…YKDL), 379–412 (NDSN…DQLY), and 583–617 (IQHF…GSVT). Residues 360-387 (QPPPQEQQLMDDDSNSNSNNDSNNIIKN) form a disordered region. Low complexity predominate over residues 374-387 (NSNSNNDSNNIIKN). 2 disordered regions span residues 639-660 (NNNN…NNNN) and 761-797 (DDND…KTTT). Positions 766-778 (DNNNNNNNNNNNN) are enriched in low complexity.

This chain is TPR repeat-containing protein DDB_G0287999, found in Dictyostelium discoideum (Social amoeba).